The following is a 288-amino-acid chain: Bifunctional protein FolD (288 aa).

Residues 166–168 (GAS) and Ile232 each bind NADP(+).

Belongs to the tetrahydrofolate dehydrogenase/cyclohydrolase family. In terms of assembly, homodimer.

The catalysed reaction is (6R)-5,10-methylene-5,6,7,8-tetrahydrofolate + NADP(+) = (6R)-5,10-methenyltetrahydrofolate + NADPH. It carries out the reaction (6R)-5,10-methenyltetrahydrofolate + H2O = (6R)-10-formyltetrahydrofolate + H(+). It functions in the pathway one-carbon metabolism; tetrahydrofolate interconversion. In terms of biological role, catalyzes the oxidation of 5,10-methylenetetrahydrofolate to 5,10-methenyltetrahydrofolate and then the hydrolysis of 5,10-methenyltetrahydrofolate to 10-formyltetrahydrofolate. In Escherichia coli (strain SMS-3-5 / SECEC), this protein is Bifunctional protein FolD.